A 164-amino-acid polypeptide reads, in one-letter code: Kunitz-type serine protease inhibitor BbKI (164 aa).

This sequence belongs to the protease inhibitor I3 (leguminous Kunitz-type inhibitor) family. Monomer.

The protein localises to the secreted. Functionally, inhibits bovine trypsin, human plasma kallikrein and plasmin and weakly bovine chymotrypsin. The sequence is that of Kunitz-type serine protease inhibitor BbKI from Bauhinia bauhinioides (Perlebia bauhinoides).